The primary structure comprises 319 residues: MSLNFLEFEKPIAELEAKIEALRDVSRHGGDSAIDLDKEIEQLEKKSLELKKKIFSDLGAWETAQLARHPQRPYTLDYVKHVFEEFDELAGDRAYADDKAIVAGIARLEGRPVMIIGHQKGRETREKVKRNFGMPKPEGYRKALRLMKMAERFQMPIITFIDTAGAYPGVGAEERGQSEAIATNLKEMAGLTVPVICNVVGEGGSGGALAIGVGDYVNMLQYSTYSVISPEGCASILWRDSDKAPQAAEAMGLVASRLKELELIDEIIEEPLGGAHRNHVQMAANMKATLLRQLAELEQFPQDVLLERRYQRLMNYGYC.

The CoA carboxyltransferase C-terminal domain occupies 35–296 (DLDKEIEQLE…KATLLRQLAE (262 aa)).

This sequence belongs to the AccA family. As to quaternary structure, acetyl-CoA carboxylase is a heterohexamer composed of biotin carboxyl carrier protein (AccB), biotin carboxylase (AccC) and two subunits each of ACCase subunit alpha (AccA) and ACCase subunit beta (AccD).

The protein localises to the cytoplasm. It carries out the reaction N(6)-carboxybiotinyl-L-lysyl-[protein] + acetyl-CoA = N(6)-biotinyl-L-lysyl-[protein] + malonyl-CoA. It participates in lipid metabolism; malonyl-CoA biosynthesis; malonyl-CoA from acetyl-CoA: step 1/1. Its function is as follows. Component of the acetyl coenzyme A carboxylase (ACC) complex. First, biotin carboxylase catalyzes the carboxylation of biotin on its carrier protein (BCCP) and then the CO(2) group is transferred by the carboxyltransferase to acetyl-CoA to form malonyl-CoA. The polypeptide is Acetyl-coenzyme A carboxylase carboxyl transferase subunit alpha (Vibrio vulnificus (strain CMCP6)).